Consider the following 121-residue polypeptide: Small ribosomal subunit protein uS13 (121 aa).

Residues methionine 89–lysine 121 are disordered.

Belongs to the universal ribosomal protein uS13 family. As to quaternary structure, part of the 30S ribosomal subunit. Forms a loose heterodimer with protein S19. Forms two bridges to the 50S subunit in the 70S ribosome.

Located at the top of the head of the 30S subunit, it contacts several helices of the 16S rRNA. In the 70S ribosome it contacts the 23S rRNA (bridge B1a) and protein L5 of the 50S subunit (bridge B1b), connecting the 2 subunits; these bridges are implicated in subunit movement. Contacts the tRNAs in the A and P-sites. This chain is Small ribosomal subunit protein uS13, found in Pediococcus pentosaceus (strain ATCC 25745 / CCUG 21536 / LMG 10740 / 183-1w).